Consider the following 90-residue polypeptide: MMAQSATFYGNQFVGRKMANGQVYNHGRMVAAHPSLPLGTRVRVTNRRTGKSVVVTVSDRCNCSIDLSRSAFQQIANPRKGRVPVSITRL.

It to E.coli RlpA.

This is an uncharacterized protein from Synechocystis sp. (strain ATCC 27184 / PCC 6803 / Kazusa).